We begin with the raw amino-acid sequence, 288 residues long: MFILPPPQEPLLGAHTSAAGGLHNALYEGRDIGATTVQLFTANQRQWKRRALTQEMVDQFRIALNETSLSYIMSHAGYLNNPGAPNPEILEKTRVCMHQEIADCISLGISFVNFHPGAALSDSKESCLDRAITSFSQMAPLFENHPPLVVLLETTAGQGSLIGSSFEELAYLIQGIKALIPIGVCLDTCHIFAAGYDISSVAGWEQVLKHFDAVIGLSFLRAIHLNDSVFALGKNKDRHAPIGEGCIGSDSFCFLMQDERTRMLPKYLETPGGPDLWTKEIRYLQKVC.

Residues His75, His115, Glu153, Asp187, His190, His224, Asp237, His239, and Glu269 each coordinate Zn(2+).

The protein belongs to the AP endonuclease 2 family. Requires Zn(2+) as cofactor.

It catalyses the reaction Endonucleolytic cleavage to 5'-phosphooligonucleotide end-products.. Its function is as follows. Endonuclease IV plays a role in DNA repair. It cleaves phosphodiester bonds at apurinic or apyrimidinic (AP) sites, generating a 3'-hydroxyl group and a 5'-terminal sugar phosphate. This chain is Probable endonuclease 4, found in Chlamydia trachomatis serovar L2 (strain ATCC VR-902B / DSM 19102 / 434/Bu).